The chain runs to 140 residues: Large ribosomal subunit protein uL16 (140 aa).

The protein belongs to the universal ribosomal protein uL16 family. Part of the 50S ribosomal subunit.

Functionally, binds 23S rRNA and is also seen to make contacts with the A and possibly P site tRNAs. This chain is Large ribosomal subunit protein uL16, found in Cytophaga hutchinsonii (strain ATCC 33406 / DSM 1761 / CIP 103989 / NBRC 15051 / NCIMB 9469 / D465).